Reading from the N-terminus, the 301-residue chain is NADH-cytochrome b5 reductase 3 (301 aa).

Residue glycine 2 is the site of N-myristoyl glycine attachment. In terms of domain architecture, FAD-binding FR-type spans 40–152; it reads DIKYPLRLID…RGPNGLLVYQ (113 aa). At lysine 42 the chain carries N6-acetyllysine. At tyrosine 43 the chain carries Phosphotyrosine. Lysine 50 bears the N6-acetyllysine mark. Residues arginine 92, proline 93, tyrosine 94, valine 109, lysine 111, and phenylalanine 114 each coordinate FAD. The residue at position 120 (lysine 120) is an N6-acetyllysine. Positions 126, 127, 128, and 185 each coordinate FAD.

The protein belongs to the flavoprotein pyridine nucleotide cytochrome reductase family. As to quaternary structure, component of a complex composed of cytochrome b5, NADH-cytochrome b5 reductase (CYB5R3) and MTARC2. Interacts with MTLN; the interaction is required to maintain cellular lipid composition and leads to stimulation of mitochondrial respiratory complex I activity. FAD serves as cofactor.

It localises to the endoplasmic reticulum membrane. The protein resides in the mitochondrion outer membrane. It carries out the reaction 2 Fe(III)-[cytochrome b5] + NADH = 2 Fe(II)-[cytochrome b5] + NAD(+) + H(+). Its function is as follows. Catalyzes the reduction of two molecules of cytochrome b5 using NADH as the electron donor. This Mus musculus (Mouse) protein is NADH-cytochrome b5 reductase 3.